The chain runs to 431 residues: MASPHPRKKRIVQKLPSLTQSCNGELRPCPECLQPHFSKIPILSQLITEHKFMCVSEISAHKVVFKLPKSWFQCEHLKPQEDAVLGSGSFGSVKPISKVTCAKYFTDPVDFYHELIACNLAALAQIRNSTRAIYLVRMTGAYIPCKCILFPRYAGSLYDFKCWDKISAKKLAKEFKSLVNAVNFLNDEVGIIHSDISTSNILVAHGPDFPGTFLLADLGVASLHSGNHQTELCVKNSRGKILYNMSCTRDIFLLCKDPVKPAQVIFRCYLLACKLINSETLHQTFIVGKILAQNIDMASLFYTMLECVEKMLDTKDIKPSREFYNKIGPDDESHKAYFLQFLVPRVVLLEMLSRLWDTKLSIGIDSFGNTTEKNVLEVQDKILFASWCTHLKGFLHKGGLQLNLNKLRAQPLYELVRFFLKFDYFSLSGRQ.

In terms of domain architecture, Protein kinase spans 79–368; the sequence is PQEDAVLGSG…KLSIGIDSFG (290 aa). ATP is bound by residues 85–93 and K103; that span reads LGSGSFGSV. D195 acts as the Proton acceptor in catalysis.

It belongs to the protein kinase superfamily. Tyr protein kinase family. HCMV ganciclovir subfamily.

Phosphorylates the antiviral nucleoside analog ganciclovir. This Saimiriine herpesvirus 2 (strain 11) (SaHV-2) protein is Probable ganciclovir kinase (36).